The following is a 105-amino-acid chain: Small ribosomal subunit protein uS10 (105 aa).

It belongs to the universal ribosomal protein uS10 family. Part of the 30S ribosomal subunit.

Functionally, involved in the binding of tRNA to the ribosomes. The protein is Small ribosomal subunit protein uS10 of Aster yellows witches'-broom phytoplasma (strain AYWB).